The following is a 337-amino-acid chain: RNA 3'-terminal phosphate cyclase (337 aa).

Residues glutamine 101 and 282-285 (HMSD) contribute to the ATP site. The active-site Tele-AMP-histidine intermediate is histidine 306.

The protein belongs to the RNA 3'-terminal cyclase family. Type 1 subfamily.

Its subcellular location is the cytoplasm. The enzyme catalyses a 3'-end 3'-phospho-ribonucleotide-RNA + ATP = a 3'-end 2',3'-cyclophospho-ribonucleotide-RNA + AMP + diphosphate. In terms of biological role, catalyzes the conversion of 3'-phosphate to a 2',3'-cyclic phosphodiester at the end of RNA. The mechanism of action of the enzyme occurs in 3 steps: (A) adenylation of the enzyme by ATP; (B) transfer of adenylate to an RNA-N3'P to produce RNA-N3'PP5'A; (C) and attack of the adjacent 2'-hydroxyl on the 3'-phosphorus in the diester linkage to produce the cyclic end product. The biological role of this enzyme is unknown but it is likely to function in some aspects of cellular RNA processing. This Saccharolobus islandicus (strain L.S.2.15 / Lassen #1) (Sulfolobus islandicus) protein is RNA 3'-terminal phosphate cyclase.